The chain runs to 308 residues: tRNA dimethylallyltransferase (308 aa).

14–21 (GPTASGKT) serves as a coordination point for ATP. 16–21 (TASGKT) lines the substrate pocket. Interaction with substrate tRNA stretches follow at residues 39–42 (DSAL), 163–167 (QRLSR), and 244–249 (RCVGYR).

It belongs to the IPP transferase family. In terms of assembly, monomer. Requires Mg(2+) as cofactor.

The catalysed reaction is adenosine(37) in tRNA + dimethylallyl diphosphate = N(6)-dimethylallyladenosine(37) in tRNA + diphosphate. In terms of biological role, catalyzes the transfer of a dimethylallyl group onto the adenine at position 37 in tRNAs that read codons beginning with uridine, leading to the formation of N6-(dimethylallyl)adenosine (i(6)A). The sequence is that of tRNA dimethylallyltransferase from Shewanella baltica (strain OS223).